Here is a 319-residue protein sequence, read N- to C-terminus: HPr kinase/phosphorylase (319 aa).

Catalysis depends on residues His-141 and Lys-162. ATP is bound at residue 156 to 163 (GNSGVGKS). Ser-163 contributes to the Mg(2+) binding site. Asp-180 functions as the Proton acceptor; for phosphorylation activity. Proton donor; for dephosphorylation activity in the catalytic mechanism. Residues 204 to 213 (MEIRGIGIID) form an important for the catalytic mechanism of both phosphorylation and dephosphorylation region. Glu-205 is a Mg(2+) binding site. The active site involves Arg-246. An important for the catalytic mechanism of dephosphorylation region spans residues 267 to 272 (PVKVGR).

It belongs to the HPrK/P family. Homohexamer. Requires Mg(2+) as cofactor.

It catalyses the reaction [HPr protein]-L-serine + ATP = [HPr protein]-O-phospho-L-serine + ADP + H(+). The catalysed reaction is [HPr protein]-O-phospho-L-serine + phosphate + H(+) = [HPr protein]-L-serine + diphosphate. Catalyzes the ATP- as well as the pyrophosphate-dependent phosphorylation of a specific serine residue in HPr, a phosphocarrier protein of the phosphoenolpyruvate-dependent sugar phosphotransferase system (PTS). HprK/P also catalyzes the pyrophosphate-producing, inorganic phosphate-dependent dephosphorylation (phosphorolysis) of seryl-phosphorylated HPr (P-Ser-HPr). The two antagonistic activities of HprK/P are regulated by several intracellular metabolites, which change their concentration in response to the absence or presence of rapidly metabolisable carbon sources (glucose, fructose, etc.) in the growth medium. Therefore, by controlling the phosphorylation state of HPr, HPrK/P is a sensor enzyme that plays a major role in the regulation of carbon metabolism and sugar transport: it mediates carbon catabolite repression (CCR), and regulates PTS-catalyzed carbohydrate uptake and inducer exclusion. The chain is HPr kinase/phosphorylase from Lactobacillus johnsonii (strain CNCM I-12250 / La1 / NCC 533).